A 180-amino-acid polypeptide reads, in one-letter code: Large ribosomal subunit protein uL5 (180 aa).

Belongs to the universal ribosomal protein uL5 family. Part of the 50S ribosomal subunit; part of the 5S rRNA/L5/L18/L25 subcomplex. Contacts the 5S rRNA and the P site tRNA. Forms a bridge to the 30S subunit in the 70S ribosome.

Functionally, this is one of the proteins that bind and probably mediate the attachment of the 5S RNA into the large ribosomal subunit, where it forms part of the central protuberance. In the 70S ribosome it contacts protein S13 of the 30S subunit (bridge B1b), connecting the 2 subunits; this bridge is implicated in subunit movement. Contacts the P site tRNA; the 5S rRNA and some of its associated proteins might help stabilize positioning of ribosome-bound tRNAs. This chain is Large ribosomal subunit protein uL5, found in Limosilactobacillus fermentum (strain NBRC 3956 / LMG 18251) (Lactobacillus fermentum).